The chain runs to 552 residues: Antibiotic resistance protein MAB_2355c (552 aa).

2 consecutive ABC transporter domains span residues 4 to 270 and 332 to 552; these read VQLD…RRWD and AKRA…PQWV. Residues 37–44 and 364–371 each bind ATP; these read GPNGTGKT and GGNGTGKS.

This sequence belongs to the ABC transporter superfamily. ABCF family.

The enzyme catalyses ATP + H2O = ADP + phosphate + H(+). With respect to regulation, the ATPase activity can be inhibited by ribosome-targeting antibiotics. Its function is as follows. Exhibits ATP hydrolysis activity and contributes to macrolide resistance by ribosome protection. Can also hydrolyze GTP, TTP and CTP but to a lesser extent than ATP. In vitro, rescues the transcription and translation activities affected by macrolides. Increased expression correlates with increased resistance to clarithromycin, one of the main drugs used to treat M.abscessus. The sequence is that of Antibiotic resistance protein MAB_2355c from Mycobacteroides abscessus (strain ATCC 19977 / DSM 44196 / CCUG 20993 / CIP 104536 / JCM 13569 / NCTC 13031 / TMC 1543 / L948) (Mycobacterium abscessus).